An 80-amino-acid chain; its full sequence is Acyl carrier protein (80 aa).

A Carrier domain is found at 4 to 79; sequence EEIKDKVFDI…QAIDYIVNAK (76 aa). Position 39 is an O-(pantetheine 4'-phosphoryl)serine (S39).

This sequence belongs to the acyl carrier protein (ACP) family. In terms of processing, 4'-phosphopantetheine is transferred from CoA to a specific serine of apo-ACP by AcpS. This modification is essential for activity because fatty acids are bound in thioester linkage to the sulfhydryl of the prosthetic group.

It is found in the cytoplasm. It functions in the pathway lipid metabolism; fatty acid biosynthesis. Functionally, carrier of the growing fatty acid chain in fatty acid biosynthesis. The chain is Acyl carrier protein from Prosthecochloris aestuarii (strain DSM 271 / SK 413).